A 343-amino-acid polypeptide reads, in one-letter code: Signal peptide peptidase 2 (343 aa).

Residues 1–19 (MKTHERAANLALAGLSLAP) lie on the Lumenal side of the membrane. A helical transmembrane segment spans residues 20–40 (LVVKVNPNANVILTACLAVYV). At 41 to 62 (GCYRSVKPTPPAETMSKEHAMR) the chain is on the cytoplasmic side. The chain crosses the membrane as a helical span at residues 63–83 (FPLVGSAMLLSLFLLFKFLSK). Over 84–89 (DLVNTV) the chain is Lumenal. Residues 90–110 (LTAYFFILGIAALCATLLPSI) form a helical membrane-spanning segment. The Cytoplasmic segment spans residues 111–141 (KRFLPKEWNDNAIVWRAPLFHSLSVEFTRSQ). A helical transmembrane segment spans residues 142 to 162 (VVASIPGFFFCIWYAAKKHWL). Topologically, residues 163 to 165 (ANN) are lumenal. A helical membrane pass occupies residues 166–186 (VLGISFCIQGIEMLSLGSFKT). Residues 187–188 (GA) are Cytoplasmic-facing. The helical transmembrane segment at 189-209 (ILLSGLFFYDIFWVFFTPVMV) threads the bilayer. The active site involves D198. At 210-230 (SVAKSFDAPIKLLFPTGDAAR) the chain is on the lumenal side. Residues 231 to 251 (PFSMLGLGDIVIPGIFVALAL) form a helical membrane-spanning segment. The active site involves D239. The Cytoplasmic portion of the chain corresponds to 252 to 266 (RFDVSRGIKNRYFNS). A helical membrane pass occupies residues 267-287 (AFLGYTVGLTVTIIVMNWFQA). Residues 288-290 (AQP) lie on the Lumenal side of the membrane. The PAL signature appears at 290–292 (PAL). The chain crosses the membrane as a helical span at residues 291-311 (ALLYIVPGVIGFVAVHCLWNG). At 312–343 (EVKPLLEYNESKAEEEEACEEDTDSKQNKKKE) the chain is on the cytoplasmic side. The segment covering 324–334 (AEEEEACEEDT) has biased composition (acidic residues). The interval 324–343 (AEEEEACEEDTDSKQNKKKE) is disordered. The short motif at 340–343 (KKKE) is the Endoplasmic reticulum targeting signal element.

It belongs to the peptidase A22B family. Ubiquitous.

It localises to the endoplasmic reticulum membrane. Intramembrane-cleaving aspartic protease (I-CLiP) that cleaves type II membrane signal peptides in the hydrophobic plane of the membrane. Catalyzes intramembrane proteolysis of some signal peptides after they have been cleaved from a preprotein, resulting in the release of the fragment from the ER membrane into the cytoplasm. This Oryza sativa subsp. japonica (Rice) protein is Signal peptide peptidase 2 (SPP2).